The sequence spans 177 residues: Large ribosomal subunit protein uL6 (177 aa).

It belongs to the universal ribosomal protein uL6 family. In terms of assembly, part of the 50S ribosomal subunit.

Functionally, this protein binds to the 23S rRNA, and is important in its secondary structure. It is located near the subunit interface in the base of the L7/L12 stalk, and near the tRNA binding site of the peptidyltransferase center. This chain is Large ribosomal subunit protein uL6, found in Cupriavidus necator (strain ATCC 17699 / DSM 428 / KCTC 22496 / NCIMB 10442 / H16 / Stanier 337) (Ralstonia eutropha).